Reading from the N-terminus, the 384-residue chain is Chaperone protein DnaJ (384 aa).

The 65-residue stretch at 4–68 (DFYEILGVSR…EKRQMYDQMG (65 aa)) folds into the J domain. Disordered regions lie at residues 29 to 60 (REYH…DEEK) and 73 to 131 (EQAE…GQDL). The span at 42–60 (EEKFKQAKKAKEVLTDEEK) shows a compositional bias: basic and acidic residues. A compositionally biased stretch (gly residues) spans 80–101 (GAGGGGGRGGMGGDPFGGGAGG). Low complexity predominate over residues 102–111 (FDMQDIFDQF). A compositionally biased stretch (gly residues) spans 112 to 121 (FGGGGRGGRG). A CR-type zinc finger spans residues 145-227 (GATKQLNVTR…CRGNGVVQND (83 aa)). Zn(2+) is bound by residues Cys-158, Cys-161, Cys-175, and Cys-178. 4 CXXCXGXG motif repeats span residues 158 to 165 (CDDCDGAG), 175 to 182 (CPECNGQG), 201 to 208 (CRRCDGEG), and 215 to 222 (CSTCRGNG). The interval 160–191 (DCDGAGHPPGADSETCPECNGQGQTTQVQQTP) is disordered. Low complexity predominate over residues 180–190 (GQGQTTQVQQT). Zn(2+)-binding residues include Cys-201, Cys-204, Cys-215, and Cys-218.

This sequence belongs to the DnaJ family. As to quaternary structure, homodimer. Zn(2+) is required as a cofactor.

Its subcellular location is the cytoplasm. Participates actively in the response to hyperosmotic and heat shock by preventing the aggregation of stress-denatured proteins and by disaggregating proteins, also in an autonomous, DnaK-independent fashion. Unfolded proteins bind initially to DnaJ; upon interaction with the DnaJ-bound protein, DnaK hydrolyzes its bound ATP, resulting in the formation of a stable complex. GrpE releases ADP from DnaK; ATP binding to DnaK triggers the release of the substrate protein, thus completing the reaction cycle. Several rounds of ATP-dependent interactions between DnaJ, DnaK and GrpE are required for fully efficient folding. Also involved, together with DnaK and GrpE, in the DNA replication of plasmids through activation of initiation proteins. The chain is Chaperone protein DnaJ from Haloarcula marismortui (strain ATCC 43049 / DSM 3752 / JCM 8966 / VKM B-1809) (Halobacterium marismortui).